A 403-amino-acid chain; its full sequence is Dynactin subunit 2-A (403 aa).

The interval 1–26 (MADPKYADLPGIARNEPDVYETSDLP) is disordered. The stretch at 99–132 (PQQKYQRLLHEVQELTQEVEKTQSTVKESAAEEK) forms a coiled coil. Positions 183–203 (AAKTRKNPEGKSPAKGPGPDT) are disordered. Residues 381-401 (KENLATVEDNFSNIDGRIKKL) are a coiled coil.

This sequence belongs to the dynactin subunit 2 family. As to quaternary structure, subunit of dynactin, a multiprotein complex part of a tripartite complex with dynein and a adapter, such as BICDL1, BICD2 or HOOK3. The dynactin complex is built around ACTR1A/ACTB filament and consists of an actin-related filament composed of a shoulder domain, a pointed end and a barbed end. Its length is defined by its flexible shoulder domain. The soulder is composed of 2 DCTN1 subunits, 4 DCTN2 and 2 DCTN3.

The protein resides in the cytoplasm. It localises to the cytoskeleton. It is found in the microtubule organizing center. Its subcellular location is the centrosome. The protein localises to the membrane. Its function is as follows. Part of the dynactin complex that activates the molecular motor dynein for ultra-processive transport along microtubules. In the dynactin soulder domain, binds the ACTR1A filament and acts as a molecular ruler to determine the length. Modulates cytoplasmic dynein binding to an organelle, and plays a role in prometaphase chromosome alignment and spindle organization during mitosis. Involved in anchoring microtubules to centrosomes. This chain is Dynactin subunit 2-A (dctn2-a), found in Xenopus laevis (African clawed frog).